The sequence spans 490 residues: Betaine aldehyde dehydrogenase (490 aa).

K(+)-binding residues include Thr26, Ile27, and Asp93. Residue 150 to 152 (GAW) participates in NAD(+) binding. The active-site Charge relay system is Lys162. NAD(+) is bound at residue 176 to 179 (KPSE). Val180 lines the K(+) pocket. 230–233 (GVAS) serves as a coordination point for NAD(+). Residue Leu246 coordinates K(+). Glu252 functions as the Proton acceptor in the catalytic mechanism. Residues Gly254, Cys286, and Glu387 each coordinate NAD(+). Cys286 functions as the Nucleophile in the catalytic mechanism. Cys286 is subject to Cysteine sulfenic acid (-SOH). Lys457 and Gly460 together coordinate K(+). The Charge relay system role is filled by Glu464.

The protein belongs to the aldehyde dehydrogenase family. In terms of assembly, dimer of dimers. The cofactor is K(+).

The enzyme catalyses betaine aldehyde + NAD(+) + H2O = glycine betaine + NADH + 2 H(+). The protein operates within amine and polyamine biosynthesis; betaine biosynthesis via choline pathway; betaine from betaine aldehyde: step 1/1. Involved in the biosynthesis of the osmoprotectant glycine betaine. Catalyzes the irreversible oxidation of betaine aldehyde to the corresponding acid. In Escherichia coli (strain 55989 / EAEC), this protein is Betaine aldehyde dehydrogenase.